The primary structure comprises 309 residues: Ribonuclease Z (309 aa).

Zn(2+)-binding residues include His-63, His-65, Asp-67, His-68, His-141, Asp-212, and His-270. Asp-67 functions as the Proton acceptor in the catalytic mechanism.

It belongs to the RNase Z family. As to quaternary structure, homodimer. The cofactor is Zn(2+).

It carries out the reaction Endonucleolytic cleavage of RNA, removing extra 3' nucleotides from tRNA precursor, generating 3' termini of tRNAs. A 3'-hydroxy group is left at the tRNA terminus and a 5'-phosphoryl group is left at the trailer molecule.. Functionally, zinc phosphodiesterase, which displays some tRNA 3'-processing endonuclease activity. Probably involved in tRNA maturation, by removing a 3'-trailer from precursor tRNA. This Limosilactobacillus reuteri (strain DSM 20016) (Lactobacillus reuteri) protein is Ribonuclease Z.